The chain runs to 129 residues: Ribonuclease P protein component (129 aa).

The protein belongs to the RnpA family. Consists of a catalytic RNA component (M1 or rnpB) and a protein subunit.

The catalysed reaction is Endonucleolytic cleavage of RNA, removing 5'-extranucleotides from tRNA precursor.. RNaseP catalyzes the removal of the 5'-leader sequence from pre-tRNA to produce the mature 5'-terminus. It can also cleave other RNA substrates such as 4.5S RNA. The protein component plays an auxiliary but essential role in vivo by binding to the 5'-leader sequence and broadening the substrate specificity of the ribozyme. The protein is Ribonuclease P protein component of Prochlorococcus marinus (strain MIT 9515).